Here is a 154-residue protein sequence, read N- to C-terminus: Myoglobin (154 aa).

A Globin domain is found at 2 to 148 (GLSDDEWNHV…FRNDMASKYK (147 aa)). His65 contributes to the nitrite binding site. Position 65 (His65) interacts with O2. His94 lines the heme b pocket.

This sequence belongs to the globin family. Monomeric.

It is found in the cytoplasm. Its subcellular location is the sarcoplasm. It catalyses the reaction Fe(III)-heme b-[protein] + nitric oxide + H2O = Fe(II)-heme b-[protein] + nitrite + 2 H(+). The catalysed reaction is H2O2 + AH2 = A + 2 H2O. Monomeric heme protein which primary function is to store oxygen and facilitate its diffusion within muscle tissues. Reversibly binds oxygen through a pentacoordinated heme iron and enables its timely and efficient release as needed during periods of heightened demand. Depending on the oxidative conditions of tissues and cells, and in addition to its ability to bind oxygen, it also has a nitrite reductase activity whereby it regulates the production of bioactive nitric oxide. Under stress conditions, like hypoxia and anoxia, it also protects cells against reactive oxygen species thanks to its pseudoperoxidase activity. In Chelonia mydas (Green sea-turtle), this protein is Myoglobin (MB).